Reading from the N-terminus, the 454-residue chain is Exodeoxyribonuclease 7 large subunit (454 aa).

Residues 337-352 show a composition bias toward low complexity; the sequence is ANQRQQRASQRLRQQN. The segment at 337 to 359 is disordered; it reads ANQRQQRASQRLRQQNPQPRIHR.

This sequence belongs to the XseA family. In terms of assembly, heterooligomer composed of large and small subunits.

It is found in the cytoplasm. The catalysed reaction is Exonucleolytic cleavage in either 5'- to 3'- or 3'- to 5'-direction to yield nucleoside 5'-phosphates.. Functionally, bidirectionally degrades single-stranded DNA into large acid-insoluble oligonucleotides, which are then degraded further into small acid-soluble oligonucleotides. The protein is Exodeoxyribonuclease 7 large subunit of Salmonella arizonae (strain ATCC BAA-731 / CDC346-86 / RSK2980).